Here is a 178-residue protein sequence, read N- to C-terminus: Large ribosomal subunit protein uL6 (178 aa).

Belongs to the universal ribosomal protein uL6 family. Part of the 50S ribosomal subunit.

Its function is as follows. This protein binds to the 23S rRNA, and is important in its secondary structure. It is located near the subunit interface in the base of the L7/L12 stalk, and near the tRNA binding site of the peptidyltransferase center. This chain is Large ribosomal subunit protein uL6, found in Staphylococcus carnosus (strain TM300).